We begin with the raw amino-acid sequence, 41 residues long: Large ribosomal subunit protein bL36 (41 aa).

Belongs to the bacterial ribosomal protein bL36 family.

This Stenotrophomonas maltophilia (strain R551-3) protein is Large ribosomal subunit protein bL36.